Here is a 196-residue protein sequence, read N- to C-terminus: Holliday junction branch migration complex subunit RuvA (196 aa).

The segment at 1–65 (MIGYLRGKII…EDALQLFGFH (65 aa)) is domain I. The tract at residues 66-140 (DKEEKNLFLS…GKLVSIEEGG (75 aa)) is domain II. The flexible linker stretch occupies residues 140-144 (GVVAK). The domain III stretch occupies residues 145–196 (AKSVAHTQITSALLNLGYKSQLVDQFVSSLPADIAVEDGIRKGFQTLSGGLS).

The protein belongs to the RuvA family. Homotetramer. Forms an RuvA(8)-RuvB(12)-Holliday junction (HJ) complex. HJ DNA is sandwiched between 2 RuvA tetramers; dsDNA enters through RuvA and exits via RuvB. An RuvB hexamer assembles on each DNA strand where it exits the tetramer. Each RuvB hexamer is contacted by two RuvA subunits (via domain III) on 2 adjacent RuvB subunits; this complex drives branch migration. In the full resolvosome a probable DNA-RuvA(4)-RuvB(12)-RuvC(2) complex forms which resolves the HJ.

Its subcellular location is the cytoplasm. In terms of biological role, the RuvA-RuvB-RuvC complex processes Holliday junction (HJ) DNA during genetic recombination and DNA repair, while the RuvA-RuvB complex plays an important role in the rescue of blocked DNA replication forks via replication fork reversal (RFR). RuvA specifically binds to HJ cruciform DNA, conferring on it an open structure. The RuvB hexamer acts as an ATP-dependent pump, pulling dsDNA into and through the RuvAB complex. HJ branch migration allows RuvC to scan DNA until it finds its consensus sequence, where it cleaves and resolves the cruciform DNA. In Bdellovibrio bacteriovorus (strain ATCC 15356 / DSM 50701 / NCIMB 9529 / HD100), this protein is Holliday junction branch migration complex subunit RuvA.